Consider the following 132-residue polypeptide: Acyl carrier protein 3, chloroplastic (132 aa).

A chloroplast-targeting transit peptide spans 1-49; the sequence is MASIAGSAVSFAKPVKAINTNSLSFSGARRGNAFLRLQPVPMRFAVCCS. A Carrier domain is found at 52–127; that stretch reads QDTVEKVCEI…DAATLIDKLV (76 aa). Ser-87 carries the O-(pantetheine 4'-phosphoryl)serine modification.

This sequence belongs to the acyl carrier protein (ACP) family. Post-translationally, 4'-phosphopantetheine is transferred from CoA to a specific serine of apo-ACP by acpS. This modification is essential for activity because fatty acids are bound in thioester linkage to the sulfhydryl of the prosthetic group.

It localises to the plastid. It is found in the chloroplast. It functions in the pathway lipid metabolism; fatty acid biosynthesis. Carrier of the growing fatty acid chain in fatty acid biosynthesis. The polypeptide is Acyl carrier protein 3, chloroplastic (ACL1.3) (Hordeum vulgare (Barley)).